The chain runs to 224 residues: Thymidine kinase, cytosolic (224 aa).

S13 is subject to Phosphoserine. Residues 26-33 (GPMFSGKS), 58-60 (DTR), and 98-101 (DEGQ) each bind ATP. E99 serves as the catalytic Proton acceptor. F129 serves as a coordination point for substrate. 2 residues coordinate Zn(2+): C154 and C157. Substrate is bound by residues 173-177 (VEVIG) and Y182. Residues C186 and C189 each contribute to the Zn(2+) site. Residues 203 to 205 (KEN) carry the KEN box motif.

This sequence belongs to the thymidine kinase family. As to quaternary structure, homotetramer. Tetramerization from dimerization is induced by ATP and increases catalytic efficiency due to a high affinity for thymidine. Tetramerization is inhibited by phosphorylation at Ser-13. Interacts (via the KEN box) with FZR1. Phosphorylated on Ser-13 in mitosis. Phosphorylation of Ser-13 by CDK1 during mitosis reduces homotetramerization and catalytic efficiency when DNA replication is complete and intracellular TK1 is still present at a high level. Post-translationally, polyubiquitinated. Postmitosis, ubiquitination leads to proteasomal degradation. The KEN box sequence located at the C-terminal region targets for degradation by the anaphase promoting complex (APC/C) activated and rate-limited by FZR1.

The protein resides in the cytoplasm. The enzyme catalyses thymidine + ATP = dTMP + ADP + H(+). Cell-cycle-regulated enzyme of importance in nucleotide metabolism. Catalyzes the first enzymatic step in the salvage pathway converting thymidine into thymidine monophosphate. Transcriptional regulation limits expression to the S phase of the cell cycle and transient expression coincides with the oscillation in the intracellular dTTP concentration. This chain is Thymidine kinase, cytosolic (TK1), found in Gallus gallus (Chicken).